A 274-amino-acid chain; its full sequence is Undecaprenyl-diphosphatase (274 aa).

8 helical membrane-spanning segments follow: residues 6–26, 45–65, 94–114, 117–137, 155–174, 191–211, 223–243, and 253–273; these read SLFI…LPVS, AKTF…VMFW, GHIL…HDVI, LFAP…LLAA, YRQA…PGFS, YAAA…ASGL, GDLP…LIAI, and ISFV…YMVF.

Belongs to the UppP family.

Its subcellular location is the cell inner membrane. It catalyses the reaction di-trans,octa-cis-undecaprenyl diphosphate + H2O = di-trans,octa-cis-undecaprenyl phosphate + phosphate + H(+). Catalyzes the dephosphorylation of undecaprenyl diphosphate (UPP). Confers resistance to bacitracin. The protein is Undecaprenyl-diphosphatase of Serratia proteamaculans (strain 568).